The following is a 529-amino-acid chain: Bifunctional purine biosynthesis protein PurH (529 aa).

The 148-residue stretch at 1–148 folds into the MGS-like domain; the sequence is MQQRRPVRRA…KNHKDVAIVV (148 aa). An N6-acetyllysine modification is found at K287.

This sequence belongs to the PurH family.

It catalyses the reaction (6R)-10-formyltetrahydrofolate + 5-amino-1-(5-phospho-beta-D-ribosyl)imidazole-4-carboxamide = 5-formamido-1-(5-phospho-D-ribosyl)imidazole-4-carboxamide + (6S)-5,6,7,8-tetrahydrofolate. The enzyme catalyses IMP + H2O = 5-formamido-1-(5-phospho-D-ribosyl)imidazole-4-carboxamide. It functions in the pathway purine metabolism; IMP biosynthesis via de novo pathway; 5-formamido-1-(5-phospho-D-ribosyl)imidazole-4-carboxamide from 5-amino-1-(5-phospho-D-ribosyl)imidazole-4-carboxamide (10-formyl THF route): step 1/1. It participates in purine metabolism; IMP biosynthesis via de novo pathway; IMP from 5-formamido-1-(5-phospho-D-ribosyl)imidazole-4-carboxamide: step 1/1. The sequence is that of Bifunctional purine biosynthesis protein PurH from Escherichia coli O6:H1 (strain CFT073 / ATCC 700928 / UPEC).